A 144-amino-acid polypeptide reads, in one-letter code: Large ribosomal subunit protein uL16 (144 aa).

The protein belongs to the universal ribosomal protein uL16 family. As to quaternary structure, part of the 50S ribosomal subunit.

Functionally, binds 23S rRNA and is also seen to make contacts with the A and possibly P site tRNAs. This chain is Large ribosomal subunit protein uL16, found in Bacillus licheniformis (strain ATCC 14580 / DSM 13 / JCM 2505 / CCUG 7422 / NBRC 12200 / NCIMB 9375 / NCTC 10341 / NRRL NRS-1264 / Gibson 46).